We begin with the raw amino-acid sequence, 130 residues long: Small ribosomal subunit protein uS9 (130 aa).

It belongs to the universal ribosomal protein uS9 family.

The chain is Small ribosomal subunit protein uS9 from Saccharophagus degradans (strain 2-40 / ATCC 43961 / DSM 17024).